The following is an 88-amino-acid chain: Small ribosomal subunit protein uS15 (88 aa).

The protein belongs to the universal ribosomal protein uS15 family. Part of the 30S ribosomal subunit. Forms a bridge to the 50S subunit in the 70S ribosome, contacting the 23S rRNA.

Its function is as follows. One of the primary rRNA binding proteins, it binds directly to 16S rRNA where it helps nucleate assembly of the platform of the 30S subunit by binding and bridging several RNA helices of the 16S rRNA. In terms of biological role, forms an intersubunit bridge (bridge B4) with the 23S rRNA of the 50S subunit in the ribosome. In Halothermothrix orenii (strain H 168 / OCM 544 / DSM 9562), this protein is Small ribosomal subunit protein uS15.